A 237-amino-acid polypeptide reads, in one-letter code: tRNA (guanine-N(7)-)-methyltransferase (237 aa).

Residues Asp35, Glu60, Asn87, and Asp113 each coordinate S-adenosyl-L-methionine. Asp113 is an active-site residue. Residues Lys117 and Asp149 each coordinate substrate.

This sequence belongs to the class I-like SAM-binding methyltransferase superfamily. TrmB family.

It carries out the reaction guanosine(46) in tRNA + S-adenosyl-L-methionine = N(7)-methylguanosine(46) in tRNA + S-adenosyl-L-homocysteine. The protein operates within tRNA modification; N(7)-methylguanine-tRNA biosynthesis. Catalyzes the formation of N(7)-methylguanine at position 46 (m7G46) in tRNA. The chain is tRNA (guanine-N(7)-)-methyltransferase from Synechococcus sp. (strain WH7803).